A 96-amino-acid polypeptide reads, in one-letter code: Small ribosomal subunit protein bS6c (96 aa).

Belongs to the bacterial ribosomal protein bS6 family.

It is found in the plastid. Its subcellular location is the chloroplast. Functionally, binds together with bS18 to 16S ribosomal RNA. The protein is Small ribosomal subunit protein bS6c (rps6) of Guillardia theta (Cryptophyte).